The chain runs to 370 residues: Coproporphyrin III ferrochelatase (370 aa).

Residues Ser-58 and Tyr-127 each coordinate Fe-coproporphyrin III. Positions 189 and 276 each coordinate Fe(2+).

This sequence belongs to the ferrochelatase family.

The protein localises to the cytoplasm. The catalysed reaction is Fe-coproporphyrin III + 2 H(+) = coproporphyrin III + Fe(2+). It participates in porphyrin-containing compound metabolism; protoheme biosynthesis. Involved in coproporphyrin-dependent heme b biosynthesis. Catalyzes the insertion of ferrous iron into coproporphyrin III to form Fe-coproporphyrin III. The protein is Coproporphyrin III ferrochelatase of Corynebacterium glutamicum (strain ATCC 13032 / DSM 20300 / JCM 1318 / BCRC 11384 / CCUG 27702 / LMG 3730 / NBRC 12168 / NCIMB 10025 / NRRL B-2784 / 534).